Reading from the N-terminus, the 235-residue chain is Phosphoribosylaminoimidazole-succinocarboxamide synthase (235 aa).

It belongs to the SAICAR synthetase family.

It catalyses the reaction 5-amino-1-(5-phospho-D-ribosyl)imidazole-4-carboxylate + L-aspartate + ATP = (2S)-2-[5-amino-1-(5-phospho-beta-D-ribosyl)imidazole-4-carboxamido]succinate + ADP + phosphate + 2 H(+). It functions in the pathway purine metabolism; IMP biosynthesis via de novo pathway; 5-amino-1-(5-phospho-D-ribosyl)imidazole-4-carboxamide from 5-amino-1-(5-phospho-D-ribosyl)imidazole-4-carboxylate: step 1/2. This is Phosphoribosylaminoimidazole-succinocarboxamide synthase from Streptococcus gordonii (strain Challis / ATCC 35105 / BCRC 15272 / CH1 / DL1 / V288).